A 182-amino-acid polypeptide reads, in one-letter code: Putative pre-16S rRNA nuclease (182 aa).

It belongs to the YqgF nuclease family.

The protein localises to the cytoplasm. Its function is as follows. Could be a nuclease involved in processing of the 5'-end of pre-16S rRNA. This chain is Putative pre-16S rRNA nuclease, found in Corynebacterium aurimucosum (strain ATCC 700975 / DSM 44827 / CIP 107346 / CN-1) (Corynebacterium nigricans).